A 242-amino-acid polypeptide reads, in one-letter code: MSHREAGQVAAIHFYATAPYPCSYLSGRQARSQVAIPAEAIDGGVYSQLVRLGFRRSGLYTYRPYCDSCQACIPVRLPVDQFRPNRTQRKVWRRGAGMSARWLPLAFDAEHYALYRWYQQTRHAGGGMSDDDAQQYSEFILKSGVDSHLAEFRLDGELKMVSLVDRLVDGLSAVYTFYDPEDSQSSLGVYNVLWQVEQARMLGLSYVYLGYWIADCRKMAYKSGYRPLQMLHGGRWQTMPEG.

The protein belongs to the R-transferase family. Bpt subfamily.

The protein resides in the cytoplasm. The enzyme catalyses N-terminal L-glutamyl-[protein] + L-leucyl-tRNA(Leu) = N-terminal L-leucyl-L-glutamyl-[protein] + tRNA(Leu) + H(+). It carries out the reaction N-terminal L-aspartyl-[protein] + L-leucyl-tRNA(Leu) = N-terminal L-leucyl-L-aspartyl-[protein] + tRNA(Leu) + H(+). In terms of biological role, functions in the N-end rule pathway of protein degradation where it conjugates Leu from its aminoacyl-tRNA to the N-termini of proteins containing an N-terminal aspartate or glutamate. The polypeptide is Aspartate/glutamate leucyltransferase (Chromobacterium violaceum (strain ATCC 12472 / DSM 30191 / JCM 1249 / CCUG 213 / NBRC 12614 / NCIMB 9131 / NCTC 9757 / MK)).